Consider the following 502-residue polypeptide: MAISTPMLVTFCVYIFGMILIGFIAWRSTKNFDDYILGGRSLGPFVTALSAGASDMSGWLLMGLPGAIFLSGISESWIAIGLTLGAWINWKLVAGRLRVHTEFNNNALTLPDYFTGRFEDKSRVLRIISALVILLFFTIYCASGIVAGARLFESTFGMSYETALWAGAAATIIYTFIGGFLAVSWTDTVQASLMIFALILTPVMVIVGVGGFSESLEVIKQKSIENVDMLKGLNFVAIISLMGWGLGYFGQPHILARFMAADSHHSIVHARRISMTWMILCLAGAVAVGFFGIAYFNNNPALAGAVNQNSERVFIELAQILFNPWIAGVLLSAILAAVMSTLSCQLLVCSSAITEDLYKAFLRKSASQQELVWVGRVMVLVVALIAIALAANPDNRVLGLVSYAWAGFGAAFGPVVLFSVMWSRMTRNGALAGMIIGAVTVIVWKQYGWLDLYEIIPGFIFGSLGIVIFSLLGKAPTAAMQERFAKADAHYHSAPPSKLQAE.

The next 13 membrane-spanning stretches (helical) occupy residues 6–26 (PMLVTFCVYIFGMILIGFIAW), 42–62 (LGPFVTALSAGASDMSGWLLM), 68–88 (IFLSGISESWIAIGLTLGAWI), 127–147 (IISALVILLFFTIYCASGIVA), 163–183 (ALWAGAAATIIYTFIGGFLAV), 192–212 (SLMIFALILTPVMVIVGVGGF), 235–255 (FVAIISLMGWGLGYFGQPHIL), 276–296 (TWMILCLAGAVAVGFFGIAYF), 320–340 (ILFNPWIAGVLLSAILAAVMS), 371–391 (LVWVGRVMVLVVALIAIALAA), 398–418 (LGLVSYAWAGFGAAFGPVVLF), 430–450 (ALAGMIIGAVTVIVWKQYGWL), and 452–472 (LYEIIPGFIFGSLGIVIFSLL).

It belongs to the sodium:solute symporter (SSF) (TC 2.A.21) family.

The protein localises to the cell inner membrane. It carries out the reaction L-proline(in) + Na(+)(in) = L-proline(out) + Na(+)(out). Catalyzes the sodium-dependent uptake of extracellular L-proline. The polypeptide is Sodium/proline symporter (Salmonella typhimurium (strain LT2 / SGSC1412 / ATCC 700720)).